A 470-amino-acid polypeptide reads, in one-letter code: Putative multidrug resistance protein MdtD (470 aa).

Residues 1-11 are Periplasmic-facing; sequence MTELPDNTRWQ. The helical transmembrane segment at 12 to 32 threads the bilayer; the sequence is LWIVALGFFMQSLDTTIVNTA. Residues 33 to 48 are Cytoplasmic-facing; it reads LPSMAKSLGESPLHMH. Residues 49 to 69 traverse the membrane as a helical segment; that stretch reads MVVVSYVLTVAVMLPASGWLA. At 70–76 the chain is on the periplasmic side; sequence DKIGVRN. A helical transmembrane segment spans residues 77–97; it reads IFFAAIVLFTLGSLFCALSGT. Topologically, residues 98-101 are cytoplasmic; the sequence is LNQL. The helical transmembrane segment at 102 to 124 threads the bilayer; sequence VLARVLQGVGGAMMVPVGRLTVM. Residues 125-137 are Periplasmic-facing; the sequence is KIVPRAQYMAAMT. Residues 138–158 traverse the membrane as a helical segment; that stretch reads FVTLPGQIGPLLGPALGGVLV. Residues 159 to 164 lie on the Cytoplasmic side of the membrane; that stretch reads EYASWH. Residues 165 to 185 form a helical membrane-spanning segment; sequence WIFLINIPVGIVGAMATFMLM. Topologically, residues 186–196 are periplasmic; sequence PNYTIETRRFD. Residues 197–217 traverse the membrane as a helical segment; it reads LPGFLLLAIGMAVLTLALDGS. Over 218–221 the chain is Cytoplasmic; that stretch reads KSMG. Residues 222–242 traverse the membrane as a helical segment; it reads ISPWTLAGLAAGGAAAILLYL. The Periplasmic portion of the chain corresponds to 243 to 262; it reads LHAKKNSGALFSLRLFRTPT. Residues 263 to 283 traverse the membrane as a helical segment; that stretch reads FSLGLLGSFAGRIGSGMLPFM. The Cytoplasmic portion of the chain corresponds to 284–285; the sequence is TP. A helical membrane pass occupies residues 286 to 306; sequence VFLQIGLGFSPFHAGLMMIPM. The Periplasmic segment spans residues 307-341; the sequence is VLGSMGMKRIVVQIVNRFGYRRVLVATTLGLALVS. Residues 342–362 traverse the membrane as a helical segment; that stretch reads LLFMSVALLGWYYLLPLVLLL. The Cytoplasmic segment spans residues 363–395; it reads QGMVNSARFSSMNTLTLKDLPDTLASSGNSLLS. A helical membrane pass occupies residues 396–416; that stretch reads MIMQLSMSIGVTIAGMLLGMF. At 417-430 the chain is on the periplasmic side; that stretch reads GQQHIGIDSSATHH. A helical transmembrane segment spans residues 431-451; that stretch reads VFMYTWLCMAVIIALPAIIFA. At 452 to 470 the chain is on the cytoplasmic side; that stretch reads RVPNDTQQNMVISRRKRSL.

It belongs to the major facilitator superfamily. TCR/Tet family.

The protein localises to the cell inner membrane. The sequence is that of Putative multidrug resistance protein MdtD from Salmonella heidelberg (strain SL476).